Reading from the N-terminus, the 867-residue chain is Alanine--tRNA ligase (867 aa).

H559, H563, C661, and H665 together coordinate Zn(2+).

This sequence belongs to the class-II aminoacyl-tRNA synthetase family. Zn(2+) is required as a cofactor.

Its subcellular location is the cytoplasm. The catalysed reaction is tRNA(Ala) + L-alanine + ATP = L-alanyl-tRNA(Ala) + AMP + diphosphate. In terms of biological role, catalyzes the attachment of alanine to tRNA(Ala) in a two-step reaction: alanine is first activated by ATP to form Ala-AMP and then transferred to the acceptor end of tRNA(Ala). Also edits incorrectly charged Ser-tRNA(Ala) and Gly-tRNA(Ala) via its editing domain. This chain is Alanine--tRNA ligase, found in Aquifex aeolicus (strain VF5).